The sequence spans 359 residues: Fructose-bisphosphate aldolase (359 aa).

Ser62 contacts D-glyceraldehyde 3-phosphate. Asp110 functions as the Proton donor in the catalytic mechanism. Residues His111, Asp145, Glu175, and His227 each contribute to the Zn(2+) site. Gly228 contributes to the dihydroxyacetone phosphate binding site. His265 is a Zn(2+) binding site. Dihydroxyacetone phosphate is bound by residues 266-268 (GGS) and 287-290 (NIDT).

The protein belongs to the class II fructose-bisphosphate aldolase family. As to quaternary structure, homodimer. Zn(2+) serves as cofactor.

The enzyme catalyses beta-D-fructose 1,6-bisphosphate = D-glyceraldehyde 3-phosphate + dihydroxyacetone phosphate. It functions in the pathway carbohydrate degradation; glycolysis; D-glyceraldehyde 3-phosphate and glycerone phosphate from D-glucose: step 4/4. Its function is as follows. Catalyzes the aldol condensation of dihydroxyacetone phosphate (DHAP or glycerone-phosphate) with glyceraldehyde 3-phosphate (G3P) to form fructose 1,6-bisphosphate (FBP) in gluconeogenesis and the reverse reaction in glycolysis. The chain is Fructose-bisphosphate aldolase (fba) from Haemophilus influenzae (strain ATCC 51907 / DSM 11121 / KW20 / Rd).